Reading from the N-terminus, the 21-residue chain is Putative pancreatic polypeptide 2 (21 aa).

Belongs to the NPY family.

This Homo sapiens (Human) protein is Putative pancreatic polypeptide 2 (PPY2P).